We begin with the raw amino-acid sequence, 426 residues long: Aspartate aminotransferase, mitochondrial (426 aa).

The transit peptide at 1 to 29 directs the protein to the mitochondrion; sequence MIRSARLISNIKFGQKNIRQFSTNTNWWA. The substrate site is built by Gly-60, Trp-156, and Asn-209. An N6-(pyridoxal phosphate)lysine modification is found at Lys-273. Arg-401 is a binding site for substrate.

The protein belongs to the class-I pyridoxal-phosphate-dependent aminotransferase family. As to quaternary structure, homodimer. Pyridoxal 5'-phosphate is required as a cofactor.

It is found in the mitochondrion matrix. The protein localises to the cell membrane. The enzyme catalyses L-aspartate + 2-oxoglutarate = oxaloacetate + L-glutamate. The catalysed reaction is L-kynurenine + 2-oxoglutarate = kynurenate + L-glutamate + H2O. Plays a key role in amino acid metabolism. Important for metabolite exchange between mitochondria and cytosol. In Dictyostelium discoideum (Social amoeba), this protein is Aspartate aminotransferase, mitochondrial (aatA).